The primary structure comprises 198 residues: Protein ORFi in retron Ec67 (198 aa).

This sequence belongs to the CI repressor protein family.

This Escherichia coli protein is Protein ORFi in retron Ec67.